The chain runs to 75 residues: MNFEEMMKELEEIVNRLENEDLPLEESIKLFERGVELYRKCKEILQQNRLKIIDVMKELEGEIDASGRDQENELR.

This sequence belongs to the XseB family. In terms of assembly, heterooligomer composed of large and small subunits.

It is found in the cytoplasm. It carries out the reaction Exonucleolytic cleavage in either 5'- to 3'- or 3'- to 5'-direction to yield nucleoside 5'-phosphates.. Functionally, bidirectionally degrades single-stranded DNA into large acid-insoluble oligonucleotides, which are then degraded further into small acid-soluble oligonucleotides. The polypeptide is Exodeoxyribonuclease 7 small subunit (Thermotoga maritima (strain ATCC 43589 / DSM 3109 / JCM 10099 / NBRC 100826 / MSB8)).